Consider the following 184-residue polypeptide: ATP synthase subunit b, chloroplastic (184 aa).

The helical transmembrane segment at 27-49 (LATNPINLSVVFGVLIFFGKGVL) threads the bilayer.

The protein belongs to the ATPase B chain family. F-type ATPases have 2 components, F(1) - the catalytic core - and F(0) - the membrane proton channel. F(1) has five subunits: alpha(3), beta(3), gamma(1), delta(1), epsilon(1). F(0) has four main subunits: a(1), b(1), b'(1) and c(10-14). The alpha and beta chains form an alternating ring which encloses part of the gamma chain. F(1) is attached to F(0) by a central stalk formed by the gamma and epsilon chains, while a peripheral stalk is formed by the delta, b and b' chains.

It is found in the plastid. The protein localises to the chloroplast thylakoid membrane. Functionally, f(1)F(0) ATP synthase produces ATP from ADP in the presence of a proton or sodium gradient. F-type ATPases consist of two structural domains, F(1) containing the extramembraneous catalytic core and F(0) containing the membrane proton channel, linked together by a central stalk and a peripheral stalk. During catalysis, ATP synthesis in the catalytic domain of F(1) is coupled via a rotary mechanism of the central stalk subunits to proton translocation. Its function is as follows. Component of the F(0) channel, it forms part of the peripheral stalk, linking F(1) to F(0). This is ATP synthase subunit b, chloroplastic from Nasturtium officinale (Watercress).